The primary structure comprises 308 residues: MEPGSVENLCVVYRSHDFLVVNKHWDVRIDSKAWRETLTLQKQLRHRFPELADPDTYYGFRFCHQLDFSTSGALCVALNKAAAGSAYRCFKDRRVTKAYLALVRGHVQESRMTISYAIGKNSTEGRTHTMCIEGTQGCENPKPSLTELVVLEHGLYAGDPVSKVLLQPLTGRTHQLRVHCSALGHPIVGDLTYGHALGQEDQPFRMMLHAFYLRIPTSAECVEACTPDPFVPSLDACWSPHTLLQPLDELVQVLRAAPDPDPSEGGPGPCSPCTPLPGPGRPPPPPETEVQRASCLQWLSEWTLEPDN.

Met1 carries the N-acetylmethionine modification. Asp67 is a catalytic residue. The tract at residues 257-292 (APDPDPSEGGPGPCSPCTPLPGPGRPPPPPETEVQR) is disordered. The segment covering 269 to 287 (PCSPCTPLPGPGRPPPPPE) has biased composition (pro residues).

The protein belongs to the pseudouridine synthase RluA family.

This is RNA pseudouridylate synthase domain-containing protein 1 (RPUSD1) from Bos taurus (Bovine).